We begin with the raw amino-acid sequence, 450 residues long: Phosphoglucosamine mutase (450 aa).

The active-site Phosphoserine intermediate is the S101. Positions 101, 240, 242, and 244 each coordinate Mg(2+). The residue at position 101 (S101) is a Phosphoserine.

This sequence belongs to the phosphohexose mutase family. Requires Mg(2+) as cofactor. Post-translationally, activated by phosphorylation.

The catalysed reaction is alpha-D-glucosamine 1-phosphate = D-glucosamine 6-phosphate. Catalyzes the conversion of glucosamine-6-phosphate to glucosamine-1-phosphate. In Streptococcus equi subsp. equi (strain 4047), this protein is Phosphoglucosamine mutase.